Here is a 461-residue protein sequence, read N- to C-terminus: Ribosomal protein uS12 methylthiotransferase RimO (461 aa).

The 116-residue stretch at 9 to 124 folds into the MTTase N-terminal domain; it reads PRIGMVSLGC…VMDAVHLNLP (116 aa). Positions 18, 54, 83, 159, 163, and 166 each coordinate [4Fe-4S] cluster. In terms of domain architecture, Radical SAM core spans 145-387; that stretch reads LTPRHYAYLK…AVAEAVSSQK (243 aa). The TRAM domain occupies 389–461; that stretch reads QQRVGATMQV…QGHDLIAVPV (73 aa).

Belongs to the methylthiotransferase family. RimO subfamily. [4Fe-4S] cluster is required as a cofactor.

The protein resides in the cytoplasm. It carries out the reaction L-aspartate(89)-[ribosomal protein uS12]-hydrogen + (sulfur carrier)-SH + AH2 + 2 S-adenosyl-L-methionine = 3-methylsulfanyl-L-aspartate(89)-[ribosomal protein uS12]-hydrogen + (sulfur carrier)-H + 5'-deoxyadenosine + L-methionine + A + S-adenosyl-L-homocysteine + 2 H(+). Its function is as follows. Catalyzes the methylthiolation of an aspartic acid residue of ribosomal protein uS12. The chain is Ribosomal protein uS12 methylthiotransferase RimO from Polaromonas naphthalenivorans (strain CJ2).